A 361-amino-acid polypeptide reads, in one-letter code: UDP-3-O-acylglucosamine N-acyltransferase (361 aa).

The active-site Proton acceptor is His253.

The protein belongs to the transferase hexapeptide repeat family. LpxD subfamily. As to quaternary structure, homotrimer.

The catalysed reaction is a UDP-3-O-[(3R)-3-hydroxyacyl]-alpha-D-glucosamine + a (3R)-hydroxyacyl-[ACP] = a UDP-2-N,3-O-bis[(3R)-3-hydroxyacyl]-alpha-D-glucosamine + holo-[ACP] + H(+). It functions in the pathway bacterial outer membrane biogenesis; LPS lipid A biosynthesis. Functionally, catalyzes the N-acylation of UDP-3-O-acylglucosamine using 3-hydroxyacyl-ACP as the acyl donor. Is involved in the biosynthesis of lipid A, a phosphorylated glycolipid that anchors the lipopolysaccharide to the outer membrane of the cell. This chain is UDP-3-O-acylglucosamine N-acyltransferase, found in Burkholderia thailandensis (strain ATCC 700388 / DSM 13276 / CCUG 48851 / CIP 106301 / E264).